The sequence spans 125 residues: Small ribosomal subunit protein eS8 (125 aa).

The disordered stretch occupies residues 1–20 (MIWQGRSRRKPSGGFYRKAR).

Belongs to the eukaryotic ribosomal protein eS8 family. In terms of assembly, part of the 30S ribosomal subunit.

The protein is Small ribosomal subunit protein eS8 (rps8e) of Archaeoglobus fulgidus (strain ATCC 49558 / DSM 4304 / JCM 9628 / NBRC 100126 / VC-16).